The sequence spans 451 residues: LisH domain-containing protein C1711.05 (451 aa).

Residues 6-38 (MKSKVCPLIYHFLQENGYVKTAQTFLKETGDKD) form the LisH domain. The segment at 59 to 394 (PYLTTEDVGK…VGDPSQWDFA (336 aa)) is disordered. Residues 73 to 98 (KESLEKSNDDSQKISKKGAPPEKAHS) show a composition bias toward basic and acidic residues. Low complexity predominate over residues 99–120 (SSEASGSGSSSDESDSSSSESE). The segment covering 135–145 (SESESSSEDSD) has biased composition (acidic residues). Over residues 146–174 (SSSSSSDSESESSSEGSDSSSSSSSSESE) the composition is skewed to low complexity. The segment covering 189–199 (SESESSSEDSD) has biased composition (acidic residues). A compositionally biased stretch (low complexity) spans 200-228 (SSSSSSDSESESSSEGSDSSSSSSSSESE). 2 stretches are compositionally biased toward acidic residues: residues 243 to 253 (SESESSSEDSD) and 278 to 300 (DSED…EDSD). Positions 301–319 (STSSSSDSDSSSSSEDGNS) are enriched in low complexity. Positions 320–332 (NTDTTTSGEVSAQ) are enriched in polar residues. The segment covering 333–343 (SSTNSTSSEES) has biased composition (low complexity). Residues 344–365 (TSVKDEDSSKIHDKSLKRKHED) are compositionally biased toward basic and acidic residues. Positions 369–380 (STSTKSSRTTKT) are enriched in low complexity.

The protein localises to the nucleus. It is found in the nucleolus. This Schizosaccharomyces pombe (strain 972 / ATCC 24843) (Fission yeast) protein is LisH domain-containing protein C1711.05.